The primary structure comprises 1193 residues: Protogenin (1193 aa).

The signal sequence occupies residues 1-23 (MAPPVRPGMLPLLLLLLLPPLGS). Ig-like domains follow at residues 24–124 (VPGV…AHLT), 126–217 (STIS…ASLT), 230–317 (PTII…ATLT), and 322–406 (PSFV…ARLT). Over 24–944 (VPGVWSFSEL…YYHLDQKSMT (921 aa)) the chain is Extracellular. Disulfide bonds link C54–C107 and C150–C200. N84 carries an N-linked (GlcNAc...) asparagine glycan. The N-linked (GlcNAc...) asparagine glycan is linked to N238. Disulfide bonds link C251/C299 and C343/C390. Fibronectin type-III domains are found at residues 416–510 (APYN…TLED), 512–608 (PLRP…TPKA), 613–712 (APKS…VRDR), 719–812 (PPHH…TLPE), and 817–912 (PPVG…VLPK). The N-linked (GlcNAc...) asparagine glycan is linked to N625. The helical transmembrane segment at 945–965 (GIAVGVGIALTCILICVLILI) threads the bilayer. Over 966–1193 (YRSKARKSSA…LRHAAESVPV (228 aa)) the chain is Cytoplasmic. 2 disordered regions span residues 974 to 1018 (SASK…PMMP) and 1078 to 1193 (VLIS…SVPV). Composition is skewed to polar residues over residues 978 to 990 (TTQSGTQPLSRAS) and 1086 to 1095 (PSSPGQTTSF). Residues 1105-1133 (DTEHSANSEGSHETGDSGRFSHESNDEIH) are compositionally biased toward basic and acidic residues. Residues 1136 to 1150 (SVISSTPPTSNSLTC) show a composition bias toward polar residues.

Belongs to the immunoglobulin superfamily. DCC family.

It localises to the membrane. May play a role in anteroposterior axis elongation. The polypeptide is Protogenin (Rattus norvegicus (Rat)).